The sequence spans 253 residues: Ubiquinone/menaquinone biosynthesis C-methyltransferase UbiE (253 aa).

Residues threonine 76, aspartate 97, 125–126, and serine 142 each bind S-adenosyl-L-methionine; that span reads NA.

The protein belongs to the class I-like SAM-binding methyltransferase superfamily. MenG/UbiE family.

The enzyme catalyses a 2-demethylmenaquinol + S-adenosyl-L-methionine = a menaquinol + S-adenosyl-L-homocysteine + H(+). It carries out the reaction a 2-methoxy-6-(all-trans-polyprenyl)benzene-1,4-diol + S-adenosyl-L-methionine = a 5-methoxy-2-methyl-3-(all-trans-polyprenyl)benzene-1,4-diol + S-adenosyl-L-homocysteine + H(+). It participates in quinol/quinone metabolism; menaquinone biosynthesis; menaquinol from 1,4-dihydroxy-2-naphthoate: step 2/2. Its pathway is cofactor biosynthesis; ubiquinone biosynthesis. In terms of biological role, methyltransferase required for the conversion of demethylmenaquinol (DMKH2) to menaquinol (MKH2) and the conversion of 2-polyprenyl-6-methoxy-1,4-benzoquinol (DDMQH2) to 2-polyprenyl-3-methyl-6-methoxy-1,4-benzoquinol (DMQH2). The polypeptide is Ubiquinone/menaquinone biosynthesis C-methyltransferase UbiE (Xylella fastidiosa (strain M12)).